Reading from the N-terminus, the 205-residue chain is Ras-related protein rab-6.2 (205 aa).

GTP-binding positions include 18 to 25 (EQSVGKTS), Thr-42, 66 to 70 (TAGQE), and 124 to 127 (KTDL). Residues Cys-203 and Cys-205 are each lipidated (S-geranylgeranyl cysteine). Cysteine methyl ester is present on Cys-205.

This sequence belongs to the small GTPase superfamily. Rab family. In terms of assembly, interacts with GARP complex component vps-52. Interacts (in GTP-bound form) with lin-10. May interact (in GTP-bound form) with eat-17. As to expression, highly expressed in body wall muscles, pharyngeal and vulval muscles, hypodermis, intestine, the gonad, coelomocytes, and neurons, including command interneuron (at protein level). Highly expressed in the terminal bulb muscles.

The protein resides in the perikaryon. The protein localises to the cell projection. It localises to the dendrite. It is found in the golgi apparatus. Its subcellular location is the cytoplasmic vesicle. Its function is as follows. The small GTPases Rab are key regulators of intracellular membrane trafficking, from the formation of transport vesicles to their fusion with membranes. Rabs cycle between an inactive GDP-bound form and an active GTP-bound form that is able to recruit to membranes different set of downstream effectors directly responsible for vesicle formation, movement, tethering and fusion. In its active GTP-bound form, acts redundantly with rab-6.1 (in its active GTP-bound form) to positively regulate the retrograde trafficking of cargo molecules from endosomes to the Golgi compartment. Required for the retrograde trafficking of glr-1, a subunit of AMPA-type glutamate receptors (AMPRs), out of early endosomes and into the Golgi compartment in neurons. Its role in glr-1 trafficking may partly be mediated by its interaction with lin-10 and association with components of the retromer complex such as rme-8. Together with rab-6.2, promotes the retrograde trafficking of mig-14 from endosomes to Golgi structures in the intestine. Plays a role in the epidermis to promote cuticle integrity and impermeability of the cuticle barrier to exogenous molecules. May have a role in the glycosylation of the cuticular surface. Required for seam cell division and alae formation. Required for grinder formation, which is the feeding organ that breaks down food. In contrast to rab-6.1, may play a minor role in the exocytosis of secretory vesicles (cortical granules) during the oocyte-to-embryo transition. The polypeptide is Ras-related protein rab-6.2 (Caenorhabditis elegans).